Here is a 67-residue protein sequence, read N- to C-terminus: Large ribosomal subunit protein bL35 (67 aa).

Belongs to the bacterial ribosomal protein bL35 family.

The protein is Large ribosomal subunit protein bL35 of Sinorhizobium medicae (strain WSM419) (Ensifer medicae).